The following is a 495-amino-acid chain: MTASTLKTLSAQLAAKEVSAVELARHYLARIEARADLNAFIHVDPEATLAQAQAADARLAAGDAGPLAGIPIAHKDVFVTRGWRATAGSKMLDSYVSPFDATVVERLAAAGMVTLGKTNMDEFAMGSSNENSHFGPVKNPWDVARVPGGSSGGSAAAVAADLAPAATGTDTGGSIRQPASFSGITGIKPTYGRVSRYGMIAFASSLDQGGPMARTAEDCALLLSAMAGFDARDSTSLEPGRGGDAEDFGRLLGRPLEGADAARPLAGLRIGLPQEYFGAGLADDVRTAVRAALAELETLGATLVDISLPKTELSIPTYYVIAPAEASSNLSRFDGVRYGHRAAAYRDLADMYRKTRAEGFGWEVKRRILVGTYVLSHGYYDAYYLQAQKIRRIIAQDFQNAFGQCDVIMGPVAPTVAWKLGEKTDDPLQMYLADIFTLSTSLAGLPGMSVPAGFGANGLPVGLQIIGNYFEEARMLQIAHAFQQATDWHTRRPAA.

Residues lysine 75 and serine 150 each act as charge relay system in the active site. The active-site Acyl-ester intermediate is the serine 174.

It belongs to the amidase family. GatA subfamily. As to quaternary structure, heterotrimer of A, B and C subunits.

The catalysed reaction is L-glutamyl-tRNA(Gln) + L-glutamine + ATP + H2O = L-glutaminyl-tRNA(Gln) + L-glutamate + ADP + phosphate + H(+). In terms of biological role, allows the formation of correctly charged Gln-tRNA(Gln) through the transamidation of misacylated Glu-tRNA(Gln) in organisms which lack glutaminyl-tRNA synthetase. The reaction takes place in the presence of glutamine and ATP through an activated gamma-phospho-Glu-tRNA(Gln). This is Glutamyl-tRNA(Gln) amidotransferase subunit A from Ralstonia nicotianae (strain ATCC BAA-1114 / GMI1000) (Ralstonia solanacearum).